A 297-amino-acid chain; its full sequence is Coiled-coil domain-containing protein 196 (297 aa).

Positions 83-117 (ESSVMELLKEAEEMKQNLERKNKMLRKEMEMLWNK) form a coiled coil. The interval 122-161 (EELSDQQKAPQTKNKADLQDGKAPKSPSSPRKTESELEKS) is disordered. Basic and acidic residues-rich tracts occupy residues 135-144 (NKADLQDGKA) and 152-161 (RKTESELEKS).

This chain is Coiled-coil domain-containing protein 196, found in Homo sapiens (Human).